The following is an 877-amino-acid chain: DNA polymerase I (877 aa).

Residues 1–310 (MKKKLVLIDG…FTLADRVTEE (310 aa)) enclose the 5'-3' exonuclease domain. In terms of domain architecture, 3'-5' exonuclease spans 311–465 (MLADKAALVV…ALERPFLDEL (155 aa)). Positions 469–877 (EQDRLLVELE…HYGSTWYDAK (409 aa)) are polymerase.

It belongs to the DNA polymerase type-A family. As to quaternary structure, single-chain monomer with multiple functions.

The enzyme catalyses DNA(n) + a 2'-deoxyribonucleoside 5'-triphosphate = DNA(n+1) + diphosphate. In terms of biological role, in addition to polymerase activity, this DNA polymerase exhibits 3'-5' and 5'-3' exonuclease activity. This chain is DNA polymerase I (polA), found in Bacillus caldotenax.